The chain runs to 232 residues: Cilia- and flagella-associated protein 95 (232 aa).

Over 1 to 96 (MDSSDSSCQE…PVWISETREK (96 aa)) the chain is Extracellular. Asn-75 carries N-linked (GlcNAc...) asparagine glycosylation. The helical transmembrane segment at 97–115 (MAQVCLNTKLAKIKSKALL) threads the bilayer. Over 116 to 232 (NEETMNSGII…TGGPIAPFLK (117 aa)) the chain is Cytoplasmic. The interval 153–163 (LTTYAEEYAPP) is mn.

As to quaternary structure, microtubule inner protein component of sperm flagellar doublet microtubules. Interacts with MYH9. Interacts with MYH10. In terms of tissue distribution, expressed in trachea multiciliated cells.

It is found in the cytoplasm. The protein localises to the cytoskeleton. The protein resides in the cilium axoneme. It localises to the flagellum axoneme. Its subcellular location is the cell membrane. Functionally, microtubule inner protein (MIP) part of the dynein-decorated doublet microtubules (DMTs) in cilia axoneme, which is required for motile cilia beating. The polypeptide is Cilia- and flagella-associated protein 95 (Bos taurus (Bovine)).